The sequence spans 435 residues: Ras association domain-containing protein 9 (435 aa).

Residues 1-22 (MAPFGRNLLKTRHKNRSPTKDM) form a disordered region. A Ras-associating domain is found at 25 to 119 (EEKEIVVWVC…MQFVLVKADA (95 aa)). Residues 195 to 290 (HTIHQQVKRM…DKLSAEIEKE (96 aa)) adopt a coiled-coil conformation. Residues 380–435 (NRAKESEVPSSNGEIPPFTQRVFSNYTNDTDSDTGISSNHSQDSETTVGDVVLLST) are disordered. Polar residues predominate over residues 400–426 (RVFSNYTNDTDSDTGISSNHSQDSETT).

In terms of assembly, interacts with PAM.

The protein localises to the endosome. May play a role in regulating vesicuar trafficking in cells. This is Ras association domain-containing protein 9 (RASSF9) from Homo sapiens (Human).